Reading from the N-terminus, the 113-residue chain is rRNA-processing protein cgrA (113 aa).

Residues 1–15 are compositionally biased toward polar residues; sequence MSTITTSSVASSNGM. The segment at 1–113 is disordered; it reads MSTITTSSVA…REKRNKLLHS (113 aa). Residues 37–100 are a coiled coil; the sequence is SYEKRLEARK…EKMHRKRVER (64 aa). Over residues 38–92 the composition is skewed to basic and acidic residues; that stretch reads YEKRLEARKLQEAVKEHEREMREEREAERKAQIQKIKDRRAAKEEKERYEKMAEK. Over residues 93–113 the composition is skewed to basic residues; the sequence is MHRKRVERLKRREKRNKLLHS.

It belongs to the CGR1 family.

It localises to the nucleus. It is found in the nucleolus. Involved in nucleolar integrity and required for processing of the pre-rRNA for the 60S ribosome subunit. The polypeptide is rRNA-processing protein cgrA (cgrA) (Aspergillus clavatus (strain ATCC 1007 / CBS 513.65 / DSM 816 / NCTC 3887 / NRRL 1 / QM 1276 / 107)).